A 369-amino-acid chain; its full sequence is Holliday junction branch migration complex subunit RuvB (369 aa).

The tract at residues 1-21 (MHKNENNRLLGSVSLPDDPDR) is disordered. Positions 1-184 (MHKNENNRLL…FGIPIRLNFY (184 aa)) are large ATPase domain (RuvB-L). Residues Leu-23, Arg-24, Gly-65, Lys-68, Thr-69, Thr-70, 131–133 (EDY), Arg-174, Tyr-184, and Arg-221 each bind ATP. Thr-69 contacts Mg(2+). Residues 185 to 255 (TIEELEYIVK…IADTALSRLE (71 aa)) are small ATPAse domain (RuvB-S). Positions 258-369 (HLGLDPLDRN…QKHLWEKDYD (112 aa)) are head domain (RuvB-H). Arg-294, Arg-313, and Arg-318 together coordinate DNA.

This sequence belongs to the RuvB family. As to quaternary structure, homohexamer. Forms an RuvA(8)-RuvB(12)-Holliday junction (HJ) complex. HJ DNA is sandwiched between 2 RuvA tetramers; dsDNA enters through RuvA and exits via RuvB. An RuvB hexamer assembles on each DNA strand where it exits the tetramer. Each RuvB hexamer is contacted by two RuvA subunits (via domain III) on 2 adjacent RuvB subunits; this complex drives branch migration. In the full resolvosome a probable DNA-RuvA(4)-RuvB(12)-RuvC(2) complex forms which resolves the HJ.

Its subcellular location is the cytoplasm. It carries out the reaction ATP + H2O = ADP + phosphate + H(+). In terms of biological role, the RuvA-RuvB-RuvC complex processes Holliday junction (HJ) DNA during genetic recombination and DNA repair, while the RuvA-RuvB complex plays an important role in the rescue of blocked DNA replication forks via replication fork reversal (RFR). RuvA specifically binds to HJ cruciform DNA, conferring on it an open structure. The RuvB hexamer acts as an ATP-dependent pump, pulling dsDNA into and through the RuvAB complex. RuvB forms 2 homohexamers on either side of HJ DNA bound by 1 or 2 RuvA tetramers; 4 subunits per hexamer contact DNA at a time. Coordinated motions by a converter formed by DNA-disengaged RuvB subunits stimulates ATP hydrolysis and nucleotide exchange. Immobilization of the converter enables RuvB to convert the ATP-contained energy into a lever motion, pulling 2 nucleotides of DNA out of the RuvA tetramer per ATP hydrolyzed, thus driving DNA branch migration. The RuvB motors rotate together with the DNA substrate, which together with the progressing nucleotide cycle form the mechanistic basis for DNA recombination by continuous HJ branch migration. Branch migration allows RuvC to scan DNA until it finds its consensus sequence, where it cleaves and resolves cruciform DNA. This is Holliday junction branch migration complex subunit RuvB from Bartonella bacilliformis (strain ATCC 35685 / KC583 / Herrer 020/F12,63).